The primary structure comprises 274 residues: Pyrroline-5-carboxylate reductase 3 (274 aa).

It belongs to the pyrroline-5-carboxylate reductase family. As to quaternary structure, homodecamer; composed of 5 homodimers.

It localises to the cytoplasm. It carries out the reaction L-proline + NADP(+) = (S)-1-pyrroline-5-carboxylate + NADPH + 2 H(+). The catalysed reaction is L-proline + NAD(+) = (S)-1-pyrroline-5-carboxylate + NADH + 2 H(+). The protein operates within amino-acid biosynthesis; L-proline biosynthesis; L-proline from L-glutamate 5-semialdehyde: step 1/1. In terms of biological role, oxidoreductase that catalyzes the last step in proline biosynthesis, which corresponds to the reduction of pyrroline-5-carboxylate (P5C) to L-proline using NAD(P)H. Proline is synthesized from either glutamate or ornithine; both are converted to P5C, and then to proline via pyrroline-5-carboxylate reductases (PYCRs). PYCR3 is exclusively linked to the biosynthesis of proline from ornithine. This is Pyrroline-5-carboxylate reductase 3 from Xenopus laevis (African clawed frog).